Reading from the N-terminus, the 166-residue chain is MSKIESQAGELQEKLVAVNRVSKVVKGGRIFSFTALTVVGDGSGRVGFGYGKAREVPAAIQKAMEQARRNMVKVELIEGTLHHHVKGTHAGSTVFMQPASQGTGIIAGGAMRAVLEVAGVHNVLAKTYGSTNPMNVVRATIEALADIKSPEQVAAKRGLRVEEILG.

The S5 DRBM domain maps to 11–74 (LQEKLVAVNR…EQARRNMVKV (64 aa)).

Belongs to the universal ribosomal protein uS5 family. As to quaternary structure, part of the 30S ribosomal subunit. Contacts proteins S4 and S8.

With S4 and S12 plays an important role in translational accuracy. Its function is as follows. Located at the back of the 30S subunit body where it stabilizes the conformation of the head with respect to the body. In Tolumonas auensis (strain DSM 9187 / NBRC 110442 / TA 4), this protein is Small ribosomal subunit protein uS5.